We begin with the raw amino-acid sequence, 416 residues long: Gamma-glutamyl phosphate reductase (416 aa).

The protein belongs to the gamma-glutamyl phosphate reductase family.

It localises to the cytoplasm. It carries out the reaction L-glutamate 5-semialdehyde + phosphate + NADP(+) = L-glutamyl 5-phosphate + NADPH + H(+). Its pathway is amino-acid biosynthesis; L-proline biosynthesis; L-glutamate 5-semialdehyde from L-glutamate: step 2/2. Its function is as follows. Catalyzes the NADPH-dependent reduction of L-glutamate 5-phosphate into L-glutamate 5-semialdehyde and phosphate. The product spontaneously undergoes cyclization to form 1-pyrroline-5-carboxylate. The polypeptide is Gamma-glutamyl phosphate reductase (Salmonella newport (strain SL254)).